Reading from the N-terminus, the 1304-residue chain is TPR-containing protein DDB_G0280363 (1304 aa).

6 disordered regions span residues 19-85, 153-195, 296-334, 447-477, 576-687, and 706-728; these read QQHH…HPQQ, NINN…NSSL, LPST…YTQQ, GFNW…QRQQ, QNQQ…VTTI, and LTTV…VESP. Composition is skewed to low complexity over residues 25–44, 52–85, and 153–194; these read QQNN…QFNQ, HQQH…HPQQ, and NINN…NNSS. Positions 296-306 are enriched in polar residues; it reads LPSTNSSIVSR. The segment covering 307-316 has biased composition (low complexity); it reads QQQLQQQQQK. Residues 448–465 show a composition bias toward polar residues; the sequence is FNWSPSLQPDQSTSTNHT. 2 stretches are compositionally biased toward low complexity: residues 466–477 and 576–597; these read QAMLQQQQQRQQ and QNQQ…PNQH. The span at 598-625 shows a compositional bias: basic residues; sequence HGQHQHNQHNQHHNQHHNQSHPNHKNQH. Positions 626–687 are enriched in low complexity; the sequence is QKQNQTQQST…NNNTNNVTTI (62 aa). TPR repeat units lie at residues 769–802, 899–932, 978–1011, 1046–1079, 1084–1111, 1112–1150, and 1152–1184; these read WRVY…QPYI, MKHV…VEKG, WKIY…CPEN, SKLR…AHVE, WKVF…KESL, KIHS…VPKS, and EVWC…TPQF.

This Dictyostelium discoideum (Social amoeba) protein is TPR-containing protein DDB_G0280363.